A 466-amino-acid chain; its full sequence is Alpha-1A adrenergic receptor (466 aa).

Residues 1–27 (MVLLSENASEGSNCTHPPAPVNISKAI) lie on the Extracellular side of the membrane. N-linked (GlcNAc...) asparagine glycosylation is found at Asn7, Asn13, and Asn22. A helical membrane pass occupies residues 28-51 (LLGVILGGLIIFGVLGNILVILSV). Over 52 to 64 (ACHRHLHSVTHYY) the chain is Cytoplasmic. The chain crosses the membrane as a helical span at residues 65–88 (IVNLAVADLLLTSTVLPFSAIFEI). The Extracellular segment spans residues 89–99 (LGYWAFGRVFC). Cys99 and Cys176 are oxidised to a cystine. The chain crosses the membrane as a helical span at residues 100-122 (NIWAAVDVLCCTASIMGLCIISI). At 123 to 143 (DRYIGVSYPLRYPTIVTQRRG) the chain is on the cytoplasmic side. A helical membrane pass occupies residues 144–167 (VRALLCVWVLSLVISIGPLFGWRQ). The Extracellular portion of the chain corresponds to 168–181 (PAPEDETICQINEE). The helical transmembrane segment at 182–205 (PGYVLFSALGSFYVPLAIILVMYC) threads the bilayer. The Cytoplasmic segment spans residues 206 to 273 (RVYVVAKRES…FSREKKAAKT (68 aa)). Phosphoserine; by PKA is present on Ser215. Residues 274–297 (LGIVVGCFVLCWLPFFLVMPIGSF) traverse the membrane as a helical segment. The Extracellular segment spans residues 298–305 (FPDFKPSE). The chain crosses the membrane as a helical span at residues 306–329 (TVFKIVFWLGYLNSCINPIIYPCS). At 330–466 (SQEFKKAFQN…ISLGENGEEV (137 aa)) the chain is on the cytoplasmic side. A Nuclear localization signal motif is present at residues 334-349 (KKAFQNVLRIQCLRRR). Cys345 carries S-palmitoyl cysteine lipidation.

Belongs to the G-protein coupled receptor 1 family. Adrenergic receptor subfamily. ADRA1A sub-subfamily. In terms of assembly, homo- and heterooligomer. Heterooligomerizes with ADRA1B homooligomers in cardiac myocytes. Interacts with CAVIN4. Post-translationally, C-terminal Ser or Thr residues may be phosphorylated. As to expression, abundant in heart, brain, aorta, vena cava, vas deferens, submaxillary gland, lung, and kidney. Found at lower levels in prostate, parotid gland and skeletal muscle.

Its subcellular location is the nucleus membrane. The protein localises to the cell membrane. It localises to the cytoplasm. It is found in the membrane. The protein resides in the caveola. In terms of biological role, this alpha-adrenergic receptor mediates its action by association with G proteins that activate a phosphatidylinositol-calcium second messenger system. Its effect is mediated by G(q) and G(11) proteins. Nuclear ADRA1A-ADRA1B heterooligomers regulate phenylephrine (PE)-stimulated ERK signaling in cardiac myocytes. The sequence is that of Alpha-1A adrenergic receptor (Adra1a) from Rattus norvegicus (Rat).